The following is a 236-amino-acid chain: Ascorbate-specific transmembrane electron transporter 2 (236 aa).

The Cytoplasmic segment spans residues 1–13 (MGLGLGVRAAPFT). Residues 14–34 (YAAHALAVAAAAMVLVWAIYF) form a helical membrane-spanning segment. The Cytochrome b561 domain maps to 15-219 (AAHALAVAAA…FGASVVVAAI (205 aa)). Over 35–50 (RGGLAIEATNKNLIFN) the chain is Extracellular. Residues 51-71 (VHPVLMLIGYIIIGGEAIMVY) form a helical membrane-spanning segment. Residue histidine 52 coordinates heme b. Residue 67–75 (AIMVYRVLP) participates in L-ascorbate binding. The Cytoplasmic segment spans residues 72–84 (RVLPTSNHETNKL). Residues 85-105 (IHLVLHGIALVLGAVGIYFAF) traverse the membrane as a helical segment. 2 residues coordinate heme b: histidine 86 and histidine 120. Topologically, residues 106–122 (KNHNESGIANLYSLHSW) are extracellular. 116 to 125 (LYSLHSWIGI) lines the monodehydro-L-ascorbate radical pocket. A helical transmembrane segment spans residues 123–143 (IGIGTITLYGIQWIVGFVTFF). Residues 144 to 153 (FPGAAPNVKK) lie on the Cytoplasmic side of the membrane. The helical transmembrane segment at 154-174 (GVLPWHILFGLFVYILALANA) threads the bilayer. Position 159 (histidine 159) interacts with heme b. The Extracellular segment spans residues 175 to 201 (ELGFLEKLTFLESSGLDKYGTEAFLVN). The helical transmembrane segment at 202 to 222 (FTALVVVLFGASVVVAAIAPV) threads the bilayer. The Cytoplasmic portion of the chain corresponds to 223–236 (RLEEPQGYVPIPEN).

Heme b serves as cofactor.

The protein localises to the membrane. Two-heme-containing cytochrome. Catalyzes ascorbate-dependent trans-membrane electron transfer by utilizing a concerted H(+)/e(-) transfer mechanism. The polypeptide is Ascorbate-specific transmembrane electron transporter 2 (Zea mays (Maize)).